Consider the following 304-residue polypeptide: Phytol kinase 1, chloroplastic (304 aa).

The N-terminal 59 residues, 1–59 (MAATLPLSPINHQLCRFGNNSLTTHRFCSPGFLISSPCFIGLTGMGSATQLRARRSLIS), are a transit peptide targeting the chloroplast. Transmembrane regions (helical) follow at residues 71–91 (VGAT…FESL), 105–125 (LVHI…SGST), 129–149 (YFAA…GLSI), 167–187 (ELLK…VFFW), 191–211 (PIGM…DIMG), and 227–247 (WAGS…LLYY).

It belongs to the polyprenol kinase family.

It is found in the plastid. The protein localises to the chloroplast membrane. It catalyses the reaction phytol + CTP = phytyl phosphate + CDP + H(+). It functions in the pathway cofactor biosynthesis; tocopherol biosynthesis. Kinase involved in the activation and reutilization of phytol from chlorophyll degradation in plant metabolism, including tocopherol biosynthesis. Catalyzes the conversion of phytol to phytol monophosphate (PMP) in the presence of CTP or UTP. No activity with ATP or GTP as phosphoryl donor. The protein is Phytol kinase 1, chloroplastic of Arabidopsis thaliana (Mouse-ear cress).